Consider the following 206-residue polypeptide: Imidazoleglycerol-phosphate dehydratase (206 aa).

The segment at 1-21 (MTALDSSRLLQPRTASVHRRT) is disordered.

It belongs to the imidazoleglycerol-phosphate dehydratase family.

It is found in the cytoplasm. The enzyme catalyses D-erythro-1-(imidazol-4-yl)glycerol 3-phosphate = 3-(imidazol-4-yl)-2-oxopropyl phosphate + H2O. Its pathway is amino-acid biosynthesis; L-histidine biosynthesis; L-histidine from 5-phospho-alpha-D-ribose 1-diphosphate: step 6/9. This chain is Imidazoleglycerol-phosphate dehydratase, found in Synechococcus sp. (strain JA-2-3B'a(2-13)) (Cyanobacteria bacterium Yellowstone B-Prime).